The sequence spans 858 residues: Leucine--tRNA ligase (858 aa).

A 'HIGH' region motif is present at residues proline 43 to histidine 54. Residues lysine 629 to serine 633 carry the 'KMSKS' region motif. Lysine 632 serves as a coordination point for ATP.

Belongs to the class-I aminoacyl-tRNA synthetase family.

The protein localises to the cytoplasm. It catalyses the reaction tRNA(Leu) + L-leucine + ATP = L-leucyl-tRNA(Leu) + AMP + diphosphate. This Treponema denticola (strain ATCC 35405 / DSM 14222 / CIP 103919 / JCM 8153 / KCTC 15104) protein is Leucine--tRNA ligase.